The primary structure comprises 106 residues: Toxin-like structure LSTX-D3 (106 aa).

Positions 1 to 20 (MMKVLVVVALLVTLISYSSS) are cleaved as a signal peptide. The propeptide occupies 21-41 (EGIDDLEADELLSLMANEQTR). Cystine bridges form between C45–C60, C52–C69, C59–C85, and C71–C83.

This sequence belongs to the neurotoxin 19 (CSTX) family. 02 (D7) subfamily. In terms of tissue distribution, expressed by the venom gland.

It localises to the secreted. The protein is Toxin-like structure LSTX-D3 of Lycosa singoriensis (Wolf spider).